A 380-amino-acid polypeptide reads, in one-letter code: Crotonobetainyl-CoA reductase (380 aa).

It belongs to the acyl-CoA dehydrogenase family. As to quaternary structure, homotetramer. FAD is required as a cofactor.

The protein localises to the cytoplasm. The enzyme catalyses 4-(trimethylamino)butanoyl-CoA + oxidized [electron-transfer flavoprotein] + H(+) = crotonobetainyl-CoA + reduced [electron-transfer flavoprotein]. It participates in amine and polyamine metabolism; carnitine metabolism. In terms of biological role, catalyzes the reduction of crotonobetainyl-CoA to gamma-butyrobetainyl-CoA. The sequence is that of Crotonobetainyl-CoA reductase from Escherichia coli (strain UTI89 / UPEC).